The primary structure comprises 702 residues: Polyribonucleotide nucleotidyltransferase 1 (702 aa).

The Mg(2+) site is built by D483 and D489. One can recognise a KH domain in the interval 550-609 (PQVTKLKVHPDKVREVIGAGGKVINKIIDETGVKINIENDGTIYIAAPDQESARVALEMI). One can recognise an S1 motif domain in the interval 619-687 (GEVYTGKVIK…PQGKIGLSRK (69 aa)).

It belongs to the polyribonucleotide nucleotidyltransferase family. The cofactor is Mg(2+).

The protein localises to the cytoplasm. It carries out the reaction RNA(n+1) + phosphate = RNA(n) + a ribonucleoside 5'-diphosphate. Functionally, involved in mRNA degradation. Catalyzes the phosphorolysis of single-stranded polyribonucleotides processively in the 3'- to 5'-direction. This is Polyribonucleotide nucleotidyltransferase 1 from Alkaliphilus metalliredigens (strain QYMF).